Consider the following 553-residue polypeptide: Hydroxylamine reductase (553 aa).

The [2Fe-2S] cluster site is built by C3, C6, C18, and C25. Hybrid [4Fe-2O-2S] cluster is bound by residues H252, E276, C320, C408, C436, C461, E495, and K497. Residue C408 is modified to Cysteine persulfide.

Belongs to the HCP family. [2Fe-2S] cluster serves as cofactor. The cofactor is hybrid [4Fe-2O-2S] cluster.

It is found in the cytoplasm. It catalyses the reaction A + NH4(+) + H2O = hydroxylamine + AH2 + H(+). Functionally, catalyzes the reduction of hydroxylamine to form NH(3) and H(2)O. The sequence is that of Hydroxylamine reductase from Tolumonas auensis (strain DSM 9187 / NBRC 110442 / TA 4).